A 691-amino-acid polypeptide reads, in one-letter code: 1-butanol dehydrogenase (cytochrome c) (691 aa).

Residues 1–38 (MLTTTFARKREESVPLRKGIQRALLGLSCLVLSTTSFA) form the signal peptide. E84 lines the pyrroloquinoline quinone pocket. A disulfide bond links C130 and C131. Residues R136, T181, and 197–198 (GA) contribute to the pyrroloquinoline quinone site. E199 and D322 together coordinate Ca(2+). D322 acts as the Proton acceptor in catalysis. Residues K349, 408 to 409 (NW), and V558 contribute to the pyrroloquinoline quinone site. In terms of domain architecture, Cytochrome c spans 605-684 (DDVAEGTGLY…KIKAFILGTA (80 aa)). 4 residues coordinate heme c: C618, C621, H622, and M661.

This sequence belongs to the bacterial PQQ dehydrogenase family. As to quaternary structure, monomer. It depends on pyrroloquinoline quinone as a cofactor. Ca(2+) is required as a cofactor. Requires heme c as cofactor.

The protein resides in the periplasm. It catalyses the reaction butan-1-ol + 2 Fe(III)-[cytochrome c] = butanal + 2 Fe(II)-[cytochrome c] + 2 H(+). With respect to regulation, dehydrogenase activity is increased by ammonium ions. In terms of biological role, involved in the metabolism of butane. Could be important in the detoxification of 1-butanol. Catalyzes the oxidation of 1-butanol to butyraldehyde. Also able to use 1-propanol, 2-pentanol, propionaldehyde and butyraldehyde as substrates. The polypeptide is 1-butanol dehydrogenase (cytochrome c) (Thauera butanivorans (strain ATCC 43655 / DSM 2080 / JCM 20651 / CCUG 51053 / NBRC 103042 / IAM 12574 / Bu B1211) (Pseudomonas butanovora)).